Consider the following 213-residue polypeptide: uncharacterized protein (213 aa).

Positions 53, 74, and 96 each coordinate S-adenosyl-L-methionine.

It belongs to the methyltransferase superfamily. YrrT family.

In terms of biological role, could be a S-adenosyl-L-methionine-dependent methyltransferase. This is an uncharacterized protein from Oceanobacillus iheyensis (strain DSM 14371 / CIP 107618 / JCM 11309 / KCTC 3954 / HTE831).